The following is a 143-amino-acid chain: Anti-sigma F factor (143 aa).

Belongs to the anti-sigma-factor family.

The enzyme catalyses L-seryl-[protein] + ATP = O-phospho-L-seryl-[protein] + ADP + H(+). It catalyses the reaction L-threonyl-[protein] + ATP = O-phospho-L-threonyl-[protein] + ADP + H(+). In terms of biological role, binds to sigma F and blocks its ability to form an RNA polymerase holoenzyme (E-sigma F). Phosphorylates SpoIIAA on a serine residue. This phosphorylation may enable SpoIIAA to act as an anti-anti-sigma factor that counteracts SpoIIAB and thus releases sigma F from inhibition. The polypeptide is Anti-sigma F factor (Thermoanaerobacter pseudethanolicus (strain ATCC 33223 / 39E) (Clostridium thermohydrosulfuricum)).